A 173-amino-acid polypeptide reads, in one-letter code: T-cell receptor beta-2 chain C region (173 aa).

Residues 1-146 are c region; that stretch reads EDLRNVTPPK…GVLSATILYE (146 aa). N-linked (GlcNAc...) asparagine glycosylation is found at N67 and N116. The helical transmembrane segment at 147–168 threads the bilayer; sequence ILLGKATLYAVLVSGLVLMAMV. The Cytoplasmic portion of the chain corresponds to 169–173; the sequence is KKKNS.

The protein localises to the membrane. This is T-cell receptor beta-2 chain C region from Mus musculus (Mouse).